The chain runs to 341 residues: HTH-type transcriptional repressor PurR (341 aa).

Residues 2–56 form the HTH lacI-type domain; that stretch reads ATIKDVAKRANVSTTTVSHVINKTRFVAEETRNAVWAAIKELHYSPSAVARSLKV. The H-T-H motif DNA-binding region spans 4 to 23; that stretch reads IKDVAKRANVSTTTVSHVIN. The DNA-binding element occupies 48–56; the sequence is SAVARSLKV. The hypoxanthine site is built by Tyr-73, Arg-190, Thr-192, Phe-221, and Asp-275.

As to quaternary structure, homodimer.

It functions in the pathway purine metabolism; purine nucleotide biosynthesis [regulation]. Functionally, is the main repressor of the genes involved in the de novo synthesis of purine nucleotides, regulating purB, purC, purEK, purF, purHD, purL, purMN and guaBA expression. PurR is allosterically activated to bind its cognate DNA by binding the purine corepressors, hypoxanthine or guanine, thereby effecting transcription repression. This is HTH-type transcriptional repressor PurR from Escherichia fergusonii (strain ATCC 35469 / DSM 13698 / CCUG 18766 / IAM 14443 / JCM 21226 / LMG 7866 / NBRC 102419 / NCTC 12128 / CDC 0568-73).